A 206-amino-acid polypeptide reads, in one-letter code: MYKQDFPEGKEALNLEIRLGNKLVRFRKFTGKEKIYLPIQRHTDKVIKLIDKDSPPLEGDAVITNLKNVEIGVRTADCVPIILLGKEWVGAVHAGWRGLKKGIIAKTLKALKEEGEDDITALVFPSAKGCCYEVGKEFKEFFRRNLKERNGKLFFDPQREAVEQLRENGIKSILVWEKCTICSPELPSYRRDKTKERMLTSVVILF.

3 residues coordinate Zn(2+): histidine 42, cysteine 78, and histidine 93.

This sequence belongs to the purine nucleoside phosphorylase YfiH/LACC1 family. In terms of assembly, homodimer. Requires Cu(2+) as cofactor. Zn(2+) serves as cofactor.

The enzyme catalyses adenosine + phosphate = alpha-D-ribose 1-phosphate + adenine. The catalysed reaction is S-methyl-5'-thioadenosine + phosphate = 5-(methylsulfanyl)-alpha-D-ribose 1-phosphate + adenine. It catalyses the reaction inosine + phosphate = alpha-D-ribose 1-phosphate + hypoxanthine. It carries out the reaction adenosine + H2O + H(+) = inosine + NH4(+). Its function is as follows. Purine nucleoside enzyme that catalyzes the phosphorolysis of adenosine and inosine nucleosides, yielding D-ribose 1-phosphate and the respective free bases, adenine and hypoxanthine. Also catalyzes the phosphorolysis of S-methyl-5'-thioadenosine into adenine and S-methyl-5-thio-alpha-D-ribose 1-phosphate. Also has adenosine deaminase activity. The protein is Purine nucleoside phosphorylase aq_167 of Aquifex aeolicus (strain VF5).